A 637-amino-acid chain; its full sequence is Poly(A) polymerase beta (637 aa).

Over residues 1–10 the composition is skewed to low complexity; that stretch reads MMPFPVTTQG. The disordered stretch occupies residues 1–23; that stretch reads MMPFPVTTQGPPQPAPPPNRYGV. Residues 101–103, threonine 110, 114–116, aspartate 168, lysine 229, tyrosine 238, and 247–248 contribute to the ATP site; these read FGS, DID, and GV. Aspartate 114, aspartate 116, and aspartate 168 together coordinate Mg(2+). Residues 535–555 are disordered; that stretch reads SVPSSTSTMKTGPLISSSQGR.

Belongs to the poly(A) polymerase family. Interacts with GSG1. The cofactor is Mg(2+). It depends on Mn(2+) as a cofactor. Testis specific.

The protein localises to the nucleus. The enzyme catalyses RNA(n) + ATP = RNA(n)-3'-adenine ribonucleotide + diphosphate. This chain is Poly(A) polymerase beta, found in Homo sapiens (Human).